The following is a 370-amino-acid chain: Aminomethyltransferase (370 aa).

This sequence belongs to the GcvT family. As to quaternary structure, the glycine cleavage system is composed of four proteins: P, T, L and H.

The enzyme catalyses N(6)-[(R)-S(8)-aminomethyldihydrolipoyl]-L-lysyl-[protein] + (6S)-5,6,7,8-tetrahydrofolate = N(6)-[(R)-dihydrolipoyl]-L-lysyl-[protein] + (6R)-5,10-methylene-5,6,7,8-tetrahydrofolate + NH4(+). Its function is as follows. The glycine cleavage system catalyzes the degradation of glycine. This chain is Aminomethyltransferase, found in Stenotrophomonas maltophilia (strain R551-3).